We begin with the raw amino-acid sequence, 381 residues long: L-lactate dehydrogenase A-like 6B (381 aa).

NAD(+)-binding positions include 101-106 (DVDEGR) and arginine 148. Residues arginine 155, asparagine 187, and arginine 218 each coordinate substrate. An NAD(+)-binding site is contributed by asparagine 187. The Proton acceptor role is filled by histidine 242. Threonine 297 serves as a coordination point for substrate.

This sequence belongs to the LDH/MDH superfamily. LDH family.

It catalyses the reaction (S)-lactate + NAD(+) = pyruvate + NADH + H(+). It participates in fermentation; pyruvate fermentation to lactate; (S)-lactate from pyruvate: step 1/1. The chain is L-lactate dehydrogenase A-like 6B (LDHAL6B) from Bos taurus (Bovine).